A 56-amino-acid polypeptide reads, in one-letter code: uncharacterized protein (56 aa).

A compositionally biased stretch (basic residues) spans 21–38 (HTHTPHPHHTHTHTHHTP). Residues 21–40 (HTHTPHPHHTHTHTHHTPTH) form a disordered region.

This is an uncharacterized protein from Saccharomyces cerevisiae (strain ATCC 204508 / S288c) (Baker's yeast).